A 250-amino-acid polypeptide reads, in one-letter code: Hydroxyacylglutathione hydrolase (250 aa).

Zn(2+) is bound by residues histidine 52, histidine 54, aspartate 56, histidine 57, histidine 107, aspartate 128, and histidine 166.

The protein belongs to the metallo-beta-lactamase superfamily. Glyoxalase II family. Monomer. The cofactor is Zn(2+).

The enzyme catalyses an S-(2-hydroxyacyl)glutathione + H2O = a 2-hydroxy carboxylate + glutathione + H(+). It participates in secondary metabolite metabolism; methylglyoxal degradation; (R)-lactate from methylglyoxal: step 2/2. Its function is as follows. Thiolesterase that catalyzes the hydrolysis of S-D-lactoyl-glutathione to form glutathione and D-lactic acid. The protein is Hydroxyacylglutathione hydrolase of Neisseria meningitidis serogroup A / serotype 4A (strain DSM 15465 / Z2491).